The sequence spans 151 residues: Globin CTT-IIIA (151 aa).

The 140-residue stretch at 8–147 folds into the Globin domain; that stretch reads SMTDAQVAAV…MFHVIFNALD (140 aa). His-98 serves as a coordination point for heme b.

This sequence belongs to the globin family. In terms of assembly, monomer.

The chain is Globin CTT-IIIA from Chironomus thummi thummi (Midge).